The chain runs to 430 residues: MIDKVYCADVKPEMEGKRVKLAGWVYRKREVGKKVFIVLRDSSGIVQVVFSKELNEEAYREAKKLGIESSVIIEGTVKADPRAPTGAEVQADKLQVIQNVDFFPITKDASPEFLLDVRHLHLRSPKVASIMKVKGTLMQAAREWLLQDGWYEVFPPILVTGAVEGGSTLFKLKYFDKTAYLSQSAQLYLEAAIFGLEKVWSLTPSFRAEKSRTRRHLTEFWHLELEAAWMDLWDIMKVEEELVSYMVQRTLELRRSEIETFRKDLTTLKNAVPPFPRISYDEAIDILQSKGVEIEWGEDMGADEERVLTEEFEAPFFVYGYPKHIKAFYMKEDPEDPRKVLAADMLAPEGYGEIIGGSQREDNYDKLIQRILEEGMDPKDYEWYLDLRKYGSVPHSGFGLGLERLVAWVLKLDHVRWATLFPRTPSRLYP.

This sequence belongs to the class-II aminoacyl-tRNA synthetase family.

Its subcellular location is the cytoplasm. The enzyme catalyses tRNA(Asn) + L-asparagine + ATP = L-asparaginyl-tRNA(Asn) + AMP + diphosphate + H(+). This chain is Asparagine--tRNA ligase, found in Thermococcus gammatolerans (strain DSM 15229 / JCM 11827 / EJ3).